Reading from the N-terminus, the 503-residue chain is Aspartyl/glutamyl-tRNA(Asn/Gln) amidotransferase subunit B (503 aa).

The protein belongs to the GatB/GatE family. GatB subfamily. In terms of assembly, heterotrimer of A, B and C subunits.

It carries out the reaction L-glutamyl-tRNA(Gln) + L-glutamine + ATP + H2O = L-glutaminyl-tRNA(Gln) + L-glutamate + ADP + phosphate + H(+). It catalyses the reaction L-aspartyl-tRNA(Asn) + L-glutamine + ATP + H2O = L-asparaginyl-tRNA(Asn) + L-glutamate + ADP + phosphate + 2 H(+). Functionally, allows the formation of correctly charged Asn-tRNA(Asn) or Gln-tRNA(Gln) through the transamidation of misacylated Asp-tRNA(Asn) or Glu-tRNA(Gln) in organisms which lack either or both of asparaginyl-tRNA or glutaminyl-tRNA synthetases. The reaction takes place in the presence of glutamine and ATP through an activated phospho-Asp-tRNA(Asn) or phospho-Glu-tRNA(Gln). The chain is Aspartyl/glutamyl-tRNA(Asn/Gln) amidotransferase subunit B from Cereibacter sphaeroides (strain KD131 / KCTC 12085) (Rhodobacter sphaeroides).